The primary structure comprises 348 residues: tRNA N6-adenosine threonylcarbamoyltransferase (348 aa).

Residues His-118 and His-122 each coordinate Fe cation. Substrate-binding positions include 140-144 (LVSGG), Asp-173, Gly-186, Asp-190, and Asn-279. Asp-309 is a binding site for Fe cation.

This sequence belongs to the KAE1 / TsaD family. Requires Fe(2+) as cofactor.

The protein resides in the cytoplasm. It catalyses the reaction L-threonylcarbamoyladenylate + adenosine(37) in tRNA = N(6)-L-threonylcarbamoyladenosine(37) in tRNA + AMP + H(+). Its function is as follows. Required for the formation of a threonylcarbamoyl group on adenosine at position 37 (t(6)A37) in tRNAs that read codons beginning with adenine. Is involved in the transfer of the threonylcarbamoyl moiety of threonylcarbamoyl-AMP (TC-AMP) to the N6 group of A37, together with TsaE and TsaB. TsaD likely plays a direct catalytic role in this reaction. This is tRNA N6-adenosine threonylcarbamoyltransferase from Lactiplantibacillus plantarum (strain ATCC BAA-793 / NCIMB 8826 / WCFS1) (Lactobacillus plantarum).